Consider the following 598-residue polypeptide: Aspartate--tRNA(Asp/Asn) ligase (598 aa).

Glu182 is a binding site for L-aspartate. The segment at 206–209 (QIFK) is aspartate. Arg228 is a binding site for L-aspartate. ATP-binding positions include 228 to 230 (RDE) and Gln237. His456 is a binding site for L-aspartate. ATP is bound at residue Glu490. Residue Arg497 participates in L-aspartate binding. Residue 542–545 (GLDR) coordinates ATP.

It belongs to the class-II aminoacyl-tRNA synthetase family. Type 1 subfamily. As to quaternary structure, homodimer.

It localises to the cytoplasm. It carries out the reaction tRNA(Asx) + L-aspartate + ATP = L-aspartyl-tRNA(Asx) + AMP + diphosphate. Its function is as follows. Aspartyl-tRNA synthetase with relaxed tRNA specificity since it is able to aspartylate not only its cognate tRNA(Asp) but also tRNA(Asn). Reaction proceeds in two steps: L-aspartate is first activated by ATP to form Asp-AMP and then transferred to the acceptor end of tRNA(Asp/Asn). The sequence is that of Aspartate--tRNA(Asp/Asn) ligase from Lachnoclostridium phytofermentans (strain ATCC 700394 / DSM 18823 / ISDg) (Clostridium phytofermentans).